We begin with the raw amino-acid sequence, 252 residues long: Imidazole glycerol phosphate synthase subunit HisF (252 aa).

Active-site residues include Asp-11 and Asp-130.

The protein belongs to the HisA/HisF family. Heterodimer of HisH and HisF.

The protein resides in the cytoplasm. It carries out the reaction 5-[(5-phospho-1-deoxy-D-ribulos-1-ylimino)methylamino]-1-(5-phospho-beta-D-ribosyl)imidazole-4-carboxamide + L-glutamine = D-erythro-1-(imidazol-4-yl)glycerol 3-phosphate + 5-amino-1-(5-phospho-beta-D-ribosyl)imidazole-4-carboxamide + L-glutamate + H(+). Its pathway is amino-acid biosynthesis; L-histidine biosynthesis; L-histidine from 5-phospho-alpha-D-ribose 1-diphosphate: step 5/9. In terms of biological role, IGPS catalyzes the conversion of PRFAR and glutamine to IGP, AICAR and glutamate. The HisF subunit catalyzes the cyclization activity that produces IGP and AICAR from PRFAR using the ammonia provided by the HisH subunit. The polypeptide is Imidazole glycerol phosphate synthase subunit HisF (Citrifermentans bemidjiense (strain ATCC BAA-1014 / DSM 16622 / JCM 12645 / Bem) (Geobacter bemidjiensis)).